Here is a 290-residue protein sequence, read N- to C-terminus: 4-diphosphocytidyl-2-C-methyl-D-erythritol kinase (290 aa).

Lys-14 is an active-site residue. 103–113 (PMGGGLGGGSS) lines the ATP pocket. Asp-145 is an active-site residue.

Belongs to the GHMP kinase family. IspE subfamily. As to quaternary structure, homodimer.

It carries out the reaction 4-CDP-2-C-methyl-D-erythritol + ATP = 4-CDP-2-C-methyl-D-erythritol 2-phosphate + ADP + H(+). It participates in isoprenoid biosynthesis; isopentenyl diphosphate biosynthesis via DXP pathway; isopentenyl diphosphate from 1-deoxy-D-xylulose 5-phosphate: step 3/6. In terms of biological role, catalyzes the phosphorylation of the position 2 hydroxy group of 4-diphosphocytidyl-2C-methyl-D-erythritol. The chain is 4-diphosphocytidyl-2-C-methyl-D-erythritol kinase from Pectobacterium atrosepticum (strain SCRI 1043 / ATCC BAA-672) (Erwinia carotovora subsp. atroseptica).